Consider the following 263-residue polypeptide: Methylesterase 1 (263 aa).

Catalysis depends on serine 85, which acts as the Acyl-ester intermediate. Active-site charge relay system residues include aspartate 213 and histidine 241.

The protein belongs to the AB hydrolase superfamily. Methylesterase family.

The catalysed reaction is methyl (indol-3-yl)acetate + H2O = (indol-3-yl)acetate + methanol + H(+). The enzyme catalyses methyl (-)-jasmonate + H2O = jasmonate + methanol + H(+). It carries out the reaction methyl salicylate + H2O = salicylate + methanol + H(+). The protein operates within plant hormone biosynthesis. It participates in lipid metabolism; oxylipin biosynthesis. Esterase activity is down-regulated by salicylic acid (SA). Functionally, methylesterase shown to have carboxylesterase activity, methyl indole-3-acetic acid (MeIAA) esterase activity, methyl salicylate (MeSA) esterase activity and methyl jasmonate (MeJA) esterase activity in vitro. Required to convert methyl salicylate (MeSA) to salicylic acid (SA) as part of the signal transduction pathways that activate systemic acquired resistance in systemic tissue. MeSA is believed to be an inactive form that needs to be demethylated to exert a biological effect. This is Methylesterase 1 from Arabidopsis thaliana (Mouse-ear cress).